A 166-amino-acid polypeptide reads, in one-letter code: MPLSNGRNRRTRKLFKRPFRGHGLSNTSTILHTYKVGDYVTILCNSSIQHGLPYKAFHGKTGRVWNVNPHAIGVMVNKKVNNRIVVKRLHISPEHIRPSGCQKDFLERKAAVAAIRKQNIQLKKEGKPLLPLPAKRLPKQPRPAELIKGADIKFTTVAPLKFEELY.

This sequence belongs to the eukaryotic ribosomal protein eL21 family. In terms of assembly, component of the large ribosomal subunit.

The protein resides in the cytoplasm. It is found in the cytosol. Its subcellular location is the endoplasmic reticulum. In terms of biological role, component of the large ribosomal subunit. The ribosome is a large ribonucleoprotein complex responsible for the synthesis of proteins in the cell. This is Large ribosomal subunit protein eL21 (RPL21) from Entamoeba histolytica (strain ATCC 30459 / HM-1:IMSS / ABRM).